A 151-amino-acid polypeptide reads, in one-letter code: Transcriptional regulator MraZ (151 aa).

SpoVT-AbrB domains lie at 5–52 (ANAV…PLDE) and 81–124 (AVDL…DEDA).

It belongs to the MraZ family. In terms of assembly, forms oligomers.

The protein localises to the cytoplasm. It localises to the nucleoid. The sequence is that of Transcriptional regulator MraZ from Pseudomonas putida (strain W619).